A 216-amino-acid polypeptide reads, in one-letter code: ATP-dependent Clp protease proteolytic subunit (216 aa).

Ser-109 (nucleophile) is an active-site residue. The active site involves His-134.

This sequence belongs to the peptidase S14 family. In terms of assembly, fourteen ClpP subunits assemble into 2 heptameric rings which stack back to back to give a disk-like structure with a central cavity, resembling the structure of eukaryotic proteasomes.

It localises to the cytoplasm. The enzyme catalyses Hydrolysis of proteins to small peptides in the presence of ATP and magnesium. alpha-casein is the usual test substrate. In the absence of ATP, only oligopeptides shorter than five residues are hydrolyzed (such as succinyl-Leu-Tyr-|-NHMec, and Leu-Tyr-Leu-|-Tyr-Trp, in which cleavage of the -Tyr-|-Leu- and -Tyr-|-Trp bonds also occurs).. In terms of biological role, cleaves peptides in various proteins in a process that requires ATP hydrolysis. Has a chymotrypsin-like activity. Plays a major role in the degradation of misfolded proteins. In Rhodospirillum rubrum (strain ATCC 11170 / ATH 1.1.1 / DSM 467 / LMG 4362 / NCIMB 8255 / S1), this protein is ATP-dependent Clp protease proteolytic subunit.